We begin with the raw amino-acid sequence, 155 residues long: Interleukin-2 (155 aa).

The N-terminal stretch at 1–20 (MYKIQLLSCIALTLALVANG) is a signal peptide. An O-linked (GalNAc...) threonine glycan is attached at threonine 23. Cysteine 79 and cysteine 127 are joined by a disulfide.

This sequence belongs to the IL-2 family.

The protein resides in the secreted. In terms of biological role, cytokine produced by activated CD4-positive helper T-cells and to a lesser extend activated CD8-positive T-cells and natural killer (NK) cells that plays pivotal roles in the immune response and tolerance. Binds to a receptor complex composed of either the high-affinity trimeric IL-2R (IL2RA/CD25, IL2RB/CD122 and IL2RG/CD132) or the low-affinity dimeric IL-2R (IL2RB and IL2RG). Interaction with the receptor leads to oligomerization and conformation changes in the IL-2R subunits resulting in downstream signaling starting with phosphorylation of JAK1 and JAK3. In turn, JAK1 and JAK3 phosphorylate the receptor to form a docking site leading to the phosphorylation of several substrates including STAT5. This process leads to activation of several pathways including STAT, phosphoinositide-3-kinase/PI3K and mitogen-activated protein kinase/MAPK pathways. Functions as a T-cell growth factor and can increase NK-cell cytolytic activity as well. Promotes strong proliferation of activated B-cells and subsequently immunoglobulin production. Plays a pivotal role in regulating the adaptive immune system by controlling the survival and proliferation of regulatory T-cells, which are required for the maintenance of immune tolerance. Moreover, participates in the differentiation and homeostasis of effector T-cell subsets, including Th1, Th2, Th17 as well as memory CD8-positive T-cells. The sequence is that of Interleukin-2 (IL2) from Moschus berezovskii (Chinese forest musk deer).